The following is a 546-amino-acid chain: CTP synthase (546 aa).

The interval 1–269 (MNSNTKIIFV…DAKLVELLNL (269 aa)) is amidoligase domain. Ser16 lines the CTP pocket. Residue Ser16 participates in UTP binding. Residues 17 to 22 (SLGKGV) and Asp74 contribute to the ATP site. Mg(2+)-binding residues include Asp74 and Glu143. Residues 150–152 (DIE), 190–195 (KTKPTQ), and Lys226 contribute to the CTP site. Residues 190–195 (KTKPTQ) and Lys226 contribute to the UTP site. A Glutamine amidotransferase type-1 domain is found at 294–546 (IIAMVGKYVS…IQAAIENSNN (253 aa)). Gly356 contacts L-glutamine. Cys383 acts as the Nucleophile; for glutamine hydrolysis in catalysis. L-glutamine contacts are provided by residues 384-387 (LGMQ), Glu407, and Arg474. Catalysis depends on residues His519 and Glu521.

The protein belongs to the CTP synthase family. As to quaternary structure, homotetramer.

The catalysed reaction is UTP + L-glutamine + ATP + H2O = CTP + L-glutamate + ADP + phosphate + 2 H(+). It carries out the reaction L-glutamine + H2O = L-glutamate + NH4(+). It catalyses the reaction UTP + NH4(+) + ATP = CTP + ADP + phosphate + 2 H(+). It participates in pyrimidine metabolism; CTP biosynthesis via de novo pathway; CTP from UDP: step 2/2. Its activity is regulated as follows. Allosterically activated by GTP, when glutamine is the substrate; GTP has no effect on the reaction when ammonia is the substrate. The allosteric effector GTP functions by stabilizing the protein conformation that binds the tetrahedral intermediate(s) formed during glutamine hydrolysis. Inhibited by the product CTP, via allosteric rather than competitive inhibition. In terms of biological role, catalyzes the ATP-dependent amination of UTP to CTP with either L-glutamine or ammonia as the source of nitrogen. Regulates intracellular CTP levels through interactions with the four ribonucleotide triphosphates. This Francisella tularensis subsp. holarctica (strain FTNF002-00 / FTA) protein is CTP synthase.